The chain runs to 105 residues: Large ribosomal subunit protein bL21 (105 aa).

Belongs to the bacterial ribosomal protein bL21 family. Part of the 50S ribosomal subunit. Contacts protein L20.

Its function is as follows. This protein binds to 23S rRNA in the presence of protein L20. The chain is Large ribosomal subunit protein bL21 from Rhizobium etli (strain ATCC 51251 / DSM 11541 / JCM 21823 / NBRC 15573 / CFN 42).